A 610-amino-acid polypeptide reads, in one-letter code: MQYSHHCEHLLERLNKQREAGFLCDCTIVIGEFQFKAHRNVLASFSEYFGAIYRSTSENNVFLDQSQVKADGFQKLLEFIYTGTLNLDSWNVKEIHQAADYLKVEEVVTKCKIKMEDFAFIANPSSTEISSITGNIELNQQTCLLTLRDYNNREKSEVSTDLIQANPKQGALAKKSSQTKKKKKAFNSPKTGQNKTVQYPSDILENASVELFLDANKLPTPVVEQVAQINDNSELELTSVVENTFPAQDIVHTVTVKRKRGKSQPNCALKEHSMSNIASVKSPYEAENSGEELDQRYSKAKPMCNTCGKVFSEASSLRRHMRIHKGVKPYVCHLCGKAFTQCNQLKTHVRTHTGEKPYKCELCDKGFAQKCQLVFHSRMHHGEEKPYKCDVCNLQFATSSNLKIHARKHSGEKPYVCDRCGQRFAQASTLTYHVRRHTGEKPYVCDTCGKAFAVSSSLITHSRKHTGEKPYICGICGKSFISSGELNKHFRSHTGERPFICELCGNSYTDIKNLKKHKTKVHSGADKTLDSSAEDHTLSEQDSIQKSPLSETMDVKPSDMTLPLALPLGTEDHHMLLPVTDTQSPTSDTLLRSTVNGYSEPQLIFLQQLY.

The 66-residue stretch at 24–89 folds into the BTB domain; the sequence is CDCTIVIGEF…IYTGTLNLDS (66 aa). Residues 169–197 are disordered; the sequence is QGALAKKSSQTKKKKKAFNSPKTGQNKTV. Short sequence motifs (nuclear localization signal) lie at residues 174–190 and 257–262; these read KKSS…NSPK and KRKRGK. Positions 188–197 are enriched in polar residues; it reads SPKTGQNKTV. Residue serine 289 is modified to Phosphoserine. 8 C2H2-type zinc fingers span residues 302–324, 330–352, 358–381, 387–409, 415–437, 443–465, 471–493, and 499–522; these read PMCN…MRIH, YVCH…VRTH, YKCE…RMHH, YKCD…ARKH, YVCD…VRRH, YVCD…SRKH, YICG…FRSH, and FICE…TKVH. The tract at residues 521-556 is disordered; the sequence is VHSGADKTLDSSAEDHTLSEQDSIQKSPLSETMDVK. The segment covering 523–539 has biased composition (basic and acidic residues); the sequence is SGADKTLDSSAEDHTLS. A compositionally biased stretch (polar residues) spans 540–550; it reads EQDSIQKSPLS.

Belongs to the krueppel C2H2-type zinc-finger protein family. Mainly expressed in the neuromuscular system. Located in and around synaptic myonuclei in adult muscle. Expression is dysregulated after nerve injury. Also found in the testis, ovary and placenta.

The protein resides in the nucleus. The protein is Myoneurin (MYNN) of Homo sapiens (Human).